The sequence spans 178 residues: MTQLSSNDVPSMGRRQFMNLLTFGTATGVALGALYPVANYFMPLRAGGGGGGTSAKDELGNPVTKTGWLATHQAGDRSLVQGLKGDPTYLIVNEGGEIGEFGLNAICTHLGCVVPWDSGANKFICPCHGSQYDTNGKVVRGPAPLSLALAHVDIEDDAVLVKQWSETDFRTNENPWWA.

A helical membrane pass occupies residues 20-42; it reads LLTFGTATGVALGALYPVANYFM. The region spanning 65–161 is the Rieske domain; it reads KTGWLATHQA…VDIEDDAVLV (97 aa). Residues Cys107, His109, Cys125, and His128 each contribute to the [2Fe-2S] cluster site. Cys112 and Cys127 form a disulfide bridge.

Belongs to the Rieske iron-sulfur protein family. In terms of assembly, the 4 large subunits of the cytochrome b6-f complex are cytochrome b6, subunit IV (17 kDa polypeptide, PetD), cytochrome f and the Rieske protein, while the 4 small subunits are PetG, PetL, PetM and PetN. The complex functions as a dimer. The cofactor is [2Fe-2S] cluster.

Its subcellular location is the cellular thylakoid membrane. The enzyme catalyses 2 oxidized [plastocyanin] + a plastoquinol + 2 H(+)(in) = 2 reduced [plastocyanin] + a plastoquinone + 4 H(+)(out). Functionally, component of the cytochrome b6-f complex, which mediates electron transfer between photosystem II (PSII) and photosystem I (PSI), cyclic electron flow around PSI, and state transitions. This chain is Cytochrome b6-f complex iron-sulfur subunit, found in Prochlorococcus marinus (strain MIT 9312).